The sequence spans 338 residues: Mitochondrial genome maintenance exonuclease 1 (338 aa).

Residues 1–64 (MKLPLTFCRL…RSVLSRGPAQ (64 aa)) constitute a mitochondrion transit peptide. Residues Asp235, Asp248, and Lys250 contribute to the active site.

This sequence belongs to the MGME1 family.

It localises to the mitochondrion. Functionally, metal-dependent single-stranded DNA (ssDNA) exonuclease involved in mitochondrial genome maintenance. Has preference for 5'-3' exonuclease activity but is also capable of endonuclease activity on linear substrates. Necessary for maintenance of proper 7S DNA levels. Probably involved in mitochondrial DNA (mtDNA) repair, possibly via the processing of displaced DNA containing Okazaki fragments during RNA-primed DNA synthesis on the lagging strand or via processing of DNA flaps during long-patch base excision repair. Specifically binds 5-hydroxymethylcytosine (5hmC)-containing DNA in stem cells. This Mus musculus (Mouse) protein is Mitochondrial genome maintenance exonuclease 1 (Mgme1).